Consider the following 264-residue polypeptide: Probable glycerophosphodiester phosphodiesterase 2 (264 aa).

In terms of domain architecture, GP-PDE spans 17–255; it reads RIAMAHRGFT…DRADLLRDVL (239 aa). His-22 acts as the Proton acceptor in catalysis. A divalent metal cation contacts are provided by Glu-50, Asp-52, and His-65. Catalysis depends on His-65, which acts as the Proton donor.

It belongs to the glycerophosphoryl diester phosphodiesterase family. A divalent metal cation is required as a cofactor.

The catalysed reaction is a sn-glycero-3-phosphodiester + H2O = an alcohol + sn-glycerol 3-phosphate + H(+). Glycerophosphodiester phosphodiesterase hydrolyzes glycerophosphodiesters into glycerol-3-phosphate (G3P) and the corresponding alcohol. This chain is Probable glycerophosphodiester phosphodiesterase 2, found in Mycobacterium tuberculosis (strain ATCC 25618 / H37Rv).